We begin with the raw amino-acid sequence, 90 residues long: DNA-directed RNA polymerase subunit omega (90 aa).

It belongs to the RNA polymerase subunit omega family. The RNAP catalytic core consists of 2 alpha, 1 beta, 1 beta' and 1 omega subunit. When a sigma factor is associated with the core the holoenzyme is formed, which can initiate transcription.

The enzyme catalyses RNA(n) + a ribonucleoside 5'-triphosphate = RNA(n+1) + diphosphate. In terms of biological role, promotes RNA polymerase assembly. Latches the N- and C-terminal regions of the beta' subunit thereby facilitating its interaction with the beta and alpha subunits. The chain is DNA-directed RNA polymerase subunit omega from Alteromonas mediterranea (strain DSM 17117 / CIP 110805 / LMG 28347 / Deep ecotype).